The chain runs to 630 residues: Chaperone protein HtpG (630 aa).

Positions 1–343 (MAKHQFQTEA…SKDLPLNVSR (343 aa)) are a; substrate-binding. Residues 344–554 (EILQSNAVMA…KEDPAFMMAQ (211 aa)) are b. The segment at 555–630 (IMKQMGQSGD…RLNRVIAKAI (76 aa)) is c.

Belongs to the heat shock protein 90 family. Homodimer.

It localises to the cytoplasm. In terms of biological role, molecular chaperone. Has ATPase activity. The polypeptide is Chaperone protein HtpG (Sulfurimonas denitrificans (strain ATCC 33889 / DSM 1251) (Thiomicrospira denitrificans (strain ATCC 33889 / DSM 1251))).